A 141-amino-acid chain; its full sequence is Large ribosomal subunit protein uL16c (141 aa).

Over residues 1–17 the composition is skewed to basic residues; that stretch reads MLSPRRTKYRKQHRGRL. Positions 1-20 are disordered; it reads MLSPRRTKYRKQHRGRLKGT.

This sequence belongs to the universal ribosomal protein uL16 family. Part of the 50S ribosomal subunit.

It localises to the plastid. The protein localises to the chloroplast. The protein is Large ribosomal subunit protein uL16c of Staurastrum punctulatum (Green alga).